The primary structure comprises 189 residues: Putative manganese efflux pump MntP (189 aa).

The next 6 helical transmembrane spans lie at 6-26 (IFGI…AAGV), 39-59 (LAWH…YAGL), 71-91 (WIAF…SFDA), 106-126 (LVLL…SLSV), 131-151 (VWMP…GGLM), and 169-189 (VGAG…GVFY).

Belongs to the MntP (TC 9.B.29) family.

It is found in the cell inner membrane. Its function is as follows. Probably functions as a manganese efflux pump. This chain is Putative manganese efflux pump MntP, found in Desulfosudis oleivorans (strain DSM 6200 / JCM 39069 / Hxd3) (Desulfococcus oleovorans).